Consider the following 134-residue polypeptide: Putative F-box protein R638 (134 aa).

Residues 5–52 (NIMNLLNEDCILHILSFLADKDKIQLSLSCKSNLKFLHKTIYDDIYFY) form the F-box domain.

This is Putative F-box protein R638 from Acanthamoeba polyphaga mimivirus (APMV).